The primary structure comprises 59 residues: Large ribosomal subunit protein uL30 (59 aa).

This sequence belongs to the universal ribosomal protein uL30 family. As to quaternary structure, part of the 50S ribosomal subunit.

The chain is Large ribosomal subunit protein uL30 from Lactococcus lactis subsp. lactis (strain IL1403) (Streptococcus lactis).